The primary structure comprises 205 residues: Methylthioribulose-1-phosphate dehydratase (205 aa).

The Zn(2+) site is built by His96 and His98.

It belongs to the aldolase class II family. MtnB subfamily. It depends on Zn(2+) as a cofactor.

It catalyses the reaction 5-(methylsulfanyl)-D-ribulose 1-phosphate = 5-methylsulfanyl-2,3-dioxopentyl phosphate + H2O. Its pathway is amino-acid biosynthesis; L-methionine biosynthesis via salvage pathway; L-methionine from S-methyl-5-thio-alpha-D-ribose 1-phosphate: step 2/6. Functionally, catalyzes the dehydration of methylthioribulose-1-phosphate (MTRu-1-P) into 2,3-diketo-5-methylthiopentyl-1-phosphate (DK-MTP-1-P). In Exiguobacterium sp. (strain ATCC BAA-1283 / AT1b), this protein is Methylthioribulose-1-phosphate dehydratase.